Reading from the N-terminus, the 139-residue chain is Intrinsically disordered protein, expressed in pharynx 15 (139 aa).

Over residues 1–12 (MNNNQGMYNTQT) the composition is skewed to polar residues. Residues 1-98 (MNNNQGMYNT…GSSTPSPQYS (98 aa)) form a disordered region. Low complexity-rich tracts occupy residues 13-41 (TQGY…QTTT) and 49-98 (QPQQ…PQYS).

This is Intrinsically disordered protein, expressed in pharynx 15 from Caenorhabditis elegans.